We begin with the raw amino-acid sequence, 1442 residues long: MQFLSPQMEQKLHRATIHQITVSKTGDMPIRFRLRHLNYRNNKKQKNGKDKETTPPPTTTGAKEPLVNGHSAAVNGMNGHTSEGEQQKDKTAAEDKKKPDSDVMEIIQDTGFTVQILSPGVEPLSIQVSSMELVQEIHQLLMDREDTCHRTCFSLQLDGVTLDNFAELKNIEGLKEGSIIKVVEEPYTMREARIHVRHVRDLLKSMDPADAYNGVDCSSLTFLHTITQGDILEKKKGRSESVDCTPPEHIMPGAKDRPLLPLQPGVGKKGPQPLKVLTTSAWNPPPGPRKLHGDLMYLYVVTMEDKRFHISACPRGFFINQSSDDVFDPRPDNPSYLCHSLIDLLSQISPTFRRCFAQMQKKRTQRHPFERVATPYQVYTWSAPALEHTIDAIRAEDTFSSKLGYEEHIPGQTRDWNEELQTTRELPRETLPERLLRERAIFKVHSDFVTAATRGAMAVIDGNVMAINPGEDAKMQMFIWNNIFFSLGFDVRDHYKELGGDAAAFVAPRNDLHGVRVYSAVDVEGLYTLGTVVIDYRGYRVTAQSIIPGILEREQEQSVVYGSIDFGKTVLSHEKYLELLNNAGKHLKILPHSVLNEKEEEIELCSSVECKGIIGNDGRHYILDLLRTFPPDVNFLKLDEELSKDCKALGFPIEHKHKLSCLRQELLEAFVESRYLMFIKHAAFQLQQLNSAKLKQKQEAKDSKDSEKKEEPKAIEAAPVAKEPAKKDAAESNNNVESKEECPKKGSTDKAKDKSAGVPKVETEEAKKLMESLLSSDEKNESKEVVKRACEAVGSLKEYEFDIRFNPDVYSPGIKHVDNQSAANSLKKQKQLVKDAAEFLVKHQIPSFVHDCLDHTAAPMDGTTLTETLHSRGINVRYLGKVANLLAKIKQLEYLHTIAVSELIIRAAKHIFTSYMQNTEMMSMAAAISHFLNCFLTATTAVSHSGSLSESDALTKSGSSGGKQQRRQNKRSAGSKGGKPSFQCTQDNNEWQLLTPKSLWSQIEKELKSYWDYELLPAGAHDSADPVVSHYRLQKISLLRAFCLKTGVQILLREYNFEMKNKPTFGESDIVNVFPVVKHINPRASDAYNFYTTGQSKIQQGYFKDGYDLISEALNLLNNVYGAMHPENAQCLRMLARLSYIMGDPQEALAIQQRAVLMSERVNGIDHPYTIAEYAPLALYCFANSQISTALKLLYRARYLATIVCGENHPDIALLDSNISLILHAVGEYELSLRFLEHALALNIKYYGEKSLKVAVSYHLVARTQSCMGDFRSALNNEKETYAIYKQQLGETHEKTQESSECLRHLTQQAVVLQKKMNDIYSNGKLTSGLPPIHIQPPSMGSVLDMLNAINGIIFVQISSKEIANLKNEIEKRQKEGGTSEQAAAAQASQEEVDRMLTETMAKTAAGIPFEDHDKHELPVAAEASSSKQADNSSNASAQQVS.

Disordered regions lie at residues 38–100 (NYRN…KKPD) and 237–258 (GRSE…KDRP). Basic and acidic residues predominate over residues 82 to 100 (SEGEQQKDKTAAEDKKKPD). The Clu domain occupies 394 to 636 (RAEDTFSSKL…RTFPPDVNFL (243 aa)). 2 stretches are compositionally biased toward basic and acidic residues: residues 696–714 (QKQE…EPKA) and 737–763 (ESKE…KVET). Disordered regions lie at residues 696–763 (QKQE…KVET) and 949–984 (SESD…SFQC). Residues 949–958 (SESDALTKSG) show a composition bias toward polar residues. TPR repeat units lie at residues 1087-1120 (AYNF…LNNV), 1213-1246 (ALLD…NIKY), and 1248-1281 (GEKS…EKET). The interval 1373-1442 (RQKEGGTSEQ…SSNASAQQVS (70 aa)) is disordered. Low complexity predominate over residues 1380–1390 (SEQAAAAQASQ). The span at 1424 to 1442 (ASSSKQADNSSNASAQQVS) shows a compositional bias: polar residues.

This sequence belongs to the CLU family.

The protein localises to the cytoplasm. Its function is as follows. mRNA-binding protein involved in proper cytoplasmic distribution of mitochondria. The sequence is that of Clustered mitochondria protein homolog from Aedes aegypti (Yellowfever mosquito).